The sequence spans 413 residues: MKHQETTSQQYNFSIIKHGDISTPQGFTAGGMHIGLRANKKDFGWIYSSSLASAAAVYTLNQFKAAPLIVTEDTLQKSKGKLQALVVNSANANSCTGQQGIDDARQTQTWVAQQLQIPSEHVAVASTGVIGEYLPMDKIKTGTEHIKDANFATPGAFNEAILTTDTCTKHIAVSLKIDGKTVTIGGSTKGSGMIHPNMATMLAFITTDASIESNTLHQLLKSSTDHTFNMITVDGDTSTNDMVLVMANHQVEHQILSQDHPQWETFVDAFNFVCTFLAKAIARDGEGATKLISVNVSGAKSISDARKIGKTIVSSNLVKSAIFGEDANFGRIITAIGYSGCEIDPNCTYVQLNQIPVVDKGMAVLFDEQAMSNTLTHENVTIDVQLGLGNAAATAYGCDLSYDYVRINASYRT.

Positions 163, 189, 200, 286, 408, and 413 each coordinate substrate. Residue T200 is the Nucleophile of the active site.

Belongs to the ArgJ family. Heterotetramer of two alpha and two beta chains.

It localises to the cytoplasm. It catalyses the reaction N(2)-acetyl-L-ornithine + L-glutamate = N-acetyl-L-glutamate + L-ornithine. The catalysed reaction is L-glutamate + acetyl-CoA = N-acetyl-L-glutamate + CoA + H(+). The protein operates within amino-acid biosynthesis; L-arginine biosynthesis; L-ornithine and N-acetyl-L-glutamate from L-glutamate and N(2)-acetyl-L-ornithine (cyclic): step 1/1. It functions in the pathway amino-acid biosynthesis; L-arginine biosynthesis; N(2)-acetyl-L-ornithine from L-glutamate: step 1/4. Its function is as follows. Catalyzes two activities which are involved in the cyclic version of arginine biosynthesis: the synthesis of N-acetylglutamate from glutamate and acetyl-CoA as the acetyl donor, and of ornithine by transacetylation between N(2)-acetylornithine and glutamate. This Staphylococcus aureus (strain COL) protein is Arginine biosynthesis bifunctional protein ArgJ.